We begin with the raw amino-acid sequence, 484 residues long: ATP synthase subunit beta (484 aa).

162–169 (GGAGVGKT) is an ATP binding site.

Belongs to the ATPase alpha/beta chains family. F-type ATPases have 2 components, CF(1) - the catalytic core - and CF(0) - the membrane proton channel. CF(1) has five subunits: alpha(3), beta(3), gamma(1), delta(1), epsilon(1). CF(0) has four main subunits: a(1), b(1), b'(1) and c(9-12).

Its subcellular location is the cellular thylakoid membrane. The catalysed reaction is ATP + H2O + 4 H(+)(in) = ADP + phosphate + 5 H(+)(out). In terms of biological role, produces ATP from ADP in the presence of a proton gradient across the membrane. The catalytic sites are hosted primarily by the beta subunits. This Synechococcus elongatus (strain ATCC 33912 / PCC 7942 / FACHB-805) (Anacystis nidulans R2) protein is ATP synthase subunit beta.